The sequence spans 206 residues: Large ribosomal subunit protein uL4 (206 aa).

Residues 63-96 (MYKQKGTGRARHHSARAPQFRGGGKAHGPVVRSH) are disordered. A compositionally biased stretch (basic residues) spans 64 to 77 (YKQKGTGRARHHSA).

The protein belongs to the universal ribosomal protein uL4 family. As to quaternary structure, part of the 50S ribosomal subunit.

Functionally, one of the primary rRNA binding proteins, this protein initially binds near the 5'-end of the 23S rRNA. It is important during the early stages of 50S assembly. It makes multiple contacts with different domains of the 23S rRNA in the assembled 50S subunit and ribosome. Forms part of the polypeptide exit tunnel. In Allorhizobium ampelinum (strain ATCC BAA-846 / DSM 112012 / S4) (Agrobacterium vitis (strain S4)), this protein is Large ribosomal subunit protein uL4.